The primary structure comprises 120 residues: uncharacterized protein (120 aa).

A helical transmembrane segment spans residues 40–62; the sequence is SFLTDALLNLIYILFFSSSVFNW.

It is found in the membrane. This is an uncharacterized protein from Saccharomyces cerevisiae (strain ATCC 204508 / S288c) (Baker's yeast).